The following is a 369-amino-acid chain: Serine/threonine-protein kinase srb10 (369 aa).

In terms of domain architecture, Protein kinase spans 5 to 319 (YKIIGFISSG…AKQALEHVFF (315 aa)). ATP-binding positions include 11-19 (ISSGTYGKV) and Lys36. Residue Asp140 is the Proton acceptor of the active site.

This sequence belongs to the protein kinase superfamily. CMGC Ser/Thr protein kinase family. CDC2/CDKX subfamily. In terms of assembly, component of the Cdk8 module of the Mediator complex. The Cdk8 module is composed of srb8, srb9, srb10 and srb11. Interacts with med17 and med18.

It localises to the nucleus. The enzyme catalyses L-seryl-[protein] + ATP = O-phospho-L-seryl-[protein] + ADP + H(+). The catalysed reaction is L-threonyl-[protein] + ATP = O-phospho-L-threonyl-[protein] + ADP + H(+). It catalyses the reaction [DNA-directed RNA polymerase] + ATP = phospho-[DNA-directed RNA polymerase] + ADP + H(+). Its function is as follows. Catalytic component of the Cdk8 module/Srb8-11 module which is a regulatory module of the Mediator complex that regulates basal RNA polymerase II transcription. The Cdk8 module may sterically hinder the interaction between Mediator and RNA polymerase II leading to transcriptional repression of a subset of genes regulated by Mediator. This Schizosaccharomyces pombe (strain 972 / ATCC 24843) (Fission yeast) protein is Serine/threonine-protein kinase srb10 (srb10).